A 230-amino-acid chain; its full sequence is uncharacterized protein (230 aa).

Residues 19–39 (GIFQVLLQLVLAMMTVWDFAG) traverse the membrane as a helical segment. N-linked (GlcNAc...) asparagine; by host glycosylation is present at Asn41. Residues 55-75 (SFLLVLYTGLKQILEYMFSIC) traverse the membrane as a helical segment. N-linked (GlcNAc...) asparagine; by host glycans are attached at residues Asn86, Asn157, Asn168, and Asn182. Residues 172–196 (TNLHKYQNDENDTEEDSEDIEKNSD) are a coiled coil. Residues 178–205 (QNDENDTEEDSEDIEKNSDPKENSDIDS) are disordered. Positions 180–190 (DENDTEEDSED) are enriched in acidic residues. Residues 191–201 (IEKNSDPKENS) are compositionally biased toward basic and acidic residues.

The protein resides in the membrane. This is an uncharacterized protein from Acanthamoeba polyphaga mimivirus (APMV).